Here is a 347-residue protein sequence, read N- to C-terminus: MKPPILIIILSTVISGTMIVLTSSHWLLTWIGFEMNMLAIIPILMKKFNPRAMEASTKYFLTQATASMLLMMGIIINLLYSGQWTVSKNLHPMASTMMTIAMTMKLGLAPFHFWVPEVTQGIPLSSGMILLTWQKIAPLSVLYQISPSINTNLLMTMATMSVLIGGWGGLNQTQLRKILAYSSIAHMGWMVAIMTYNPTVMILNLMMYIMMTLTSFMLFIHTSATTTLSLSHTWNKTPLITSFILVLMLSLGGLPPLSGFIPKWMIIQELTKNEMIILPTLLAITALLNLYFYMRLTYATALTMFPSTNNMKMKWQFERTKKMALLPPLIIISTMLLPLTPMMSILD.

A run of 10 helical transmembrane segments spans residues 3-23, 25-45, 59-79, 93-115, 149-169, 178-198, 200-220, 242-262, 274-294, and 323-343; these read PPIL…VLTS, HWLL…PILM, YFLT…INLL, MAST…HFWV, INTN…GWGG, ILAY…TYNP, VMIL…MLFI, SFIL…GFIP, EMII…YFYM, and MALL…TPMM.

The protein belongs to the complex I subunit 2 family. Core subunit of respiratory chain NADH dehydrogenase (Complex I) which is composed of 45 different subunits. Interacts with TMEM242.

The protein localises to the mitochondrion inner membrane. It catalyses the reaction a ubiquinone + NADH + 5 H(+)(in) = a ubiquinol + NAD(+) + 4 H(+)(out). Its function is as follows. Core subunit of the mitochondrial membrane respiratory chain NADH dehydrogenase (Complex I) which catalyzes electron transfer from NADH through the respiratory chain, using ubiquinone as an electron acceptor. Essential for the catalytic activity and assembly of complex I. The polypeptide is NADH-ubiquinone oxidoreductase chain 2 (Nandinia binotata (African palm civet)).